The chain runs to 258 residues: Isoprenyl transferase 1 (258 aa).

Residue D39 is part of the active site. D39 provides a ligand contact to Mg(2+). Substrate contacts are provided by residues 40 to 43, W44, R52, H57, and 85 to 87; these read GNRR and SND. The active-site Proton acceptor is the N88. Substrate is bound by residues R92, R207, and 213 to 215; that span reads RLS. Position 226 (E226) interacts with Mg(2+).

The protein belongs to the UPP synthase family. As to quaternary structure, homodimer. Requires Mg(2+) as cofactor.

Catalyzes the condensation of isopentenyl diphosphate (IPP) with allylic pyrophosphates generating different type of terpenoids. The polypeptide is Isoprenyl transferase 1 (Tropheryma whipplei (strain TW08/27) (Whipple's bacillus)).